The following is a 143-amino-acid chain: MAIERTFSIIKPDAVAKNNIGAIYNRFETAGLKIIASKMVHLSKEQAEGFYAEHSERPFFGALVAFMTSGPIMVQTLEGENAVLAHRDILGATNPAEAAPGTIRADFAESIDENAAHGSDSVASAEREVAYFFSAEELCPRTR.

The ATP site is built by Lys-11, Phe-59, Arg-87, Thr-93, Arg-104, and Asn-114. His-117 acts as the Pros-phosphohistidine intermediate in catalysis.

The protein belongs to the NDK family. As to quaternary structure, homotetramer. Mg(2+) is required as a cofactor.

Its subcellular location is the cytoplasm. The catalysed reaction is a 2'-deoxyribonucleoside 5'-diphosphate + ATP = a 2'-deoxyribonucleoside 5'-triphosphate + ADP. It carries out the reaction a ribonucleoside 5'-diphosphate + ATP = a ribonucleoside 5'-triphosphate + ADP. Its function is as follows. Major role in the synthesis of nucleoside triphosphates other than ATP. The ATP gamma phosphate is transferred to the NDP beta phosphate via a ping-pong mechanism, using a phosphorylated active-site intermediate. The polypeptide is Nucleoside diphosphate kinase (Shewanella woodyi (strain ATCC 51908 / MS32)).